We begin with the raw amino-acid sequence, 576 residues long: Periodic tryptophan protein 1 (576 aa).

The interval 41-134 (AKATLEEAEG…LPNQEDSQEE (94 aa)) is disordered. Acidic residues-rich tracts occupy residues 46–58 (EEAE…EDDA) and 71–91 (DIDD…EIAD). Ser52 carries the post-translational modification Phosphoserine. A compositionally biased stretch (basic and acidic residues) spans 108–120 (SDVKFHEGEKGED). Residue Ser131 is modified to Phosphoserine. WD repeat units lie at residues 207 to 252 (AFPL…KAFP), 284 to 324 (HHTD…AARS), 329 to 369 (HSNK…ESQM), 376 to 414 (MAGE…NRKP), 420 to 461 (AHDA…ATNT), and 472 to 514 (FDVG…SVRK). Residues 530–576 (EAQKIGKSSRIARKYTSNDNPDTVITIDDQGEDEEEREGGDEHDDMA) form a disordered region. Residues 558–576 (DQGEDEEEREGGDEHDDMA) are compositionally biased toward acidic residues.

It belongs to the WD repeat PWP1 family.

This is Periodic tryptophan protein 1 (PWP1) from Saccharomyces cerevisiae (strain ATCC 204508 / S288c) (Baker's yeast).